Here is a 657-residue protein sequence, read N- to C-terminus: Translation factor GUF1, mitochondrial (657 aa).

A mitochondrion-targeting transit peptide spans 1 to 21 (MLKTLGLRSLCPSLGGRGFRR). The region spanning 56 to 240 (ENYRNFSIVA…TIVDRIPPPT (185 aa)) is the tr-type G domain. GTP-binding positions include 65 to 72 (AHVDHGKS), 132 to 136 (DTPGH), and 186 to 189 (NKID).

It belongs to the TRAFAC class translation factor GTPase superfamily. Classic translation factor GTPase family. LepA subfamily.

Its subcellular location is the mitochondrion inner membrane. The enzyme catalyses GTP + H2O = GDP + phosphate + H(+). In terms of biological role, promotes mitochondrial protein synthesis. May act as a fidelity factor of the translation reaction, by catalyzing a one-codon backward translocation of tRNAs on improperly translocated ribosomes. Binds to mitochondrial ribosomes in a GTP-dependent manner. This Candida glabrata (strain ATCC 2001 / BCRC 20586 / JCM 3761 / NBRC 0622 / NRRL Y-65 / CBS 138) (Yeast) protein is Translation factor GUF1, mitochondrial.